Reading from the N-terminus, the 252-residue chain is Trans-aconitate 2-methyltransferase (252 aa).

Belongs to the methyltransferase superfamily. Tam family.

The protein localises to the cytoplasm. It carries out the reaction trans-aconitate + S-adenosyl-L-methionine = (E)-3-(methoxycarbonyl)pent-2-enedioate + S-adenosyl-L-homocysteine. Catalyzes the S-adenosylmethionine monomethyl esterification of trans-aconitate. This Shigella dysenteriae serotype 1 (strain Sd197) protein is Trans-aconitate 2-methyltransferase.